A 246-amino-acid polypeptide reads, in one-letter code: Phosphomannomutase (246 aa).

Catalysis depends on D9, which acts as the Nucleophile. Mg(2+)-binding residues include D9 and D11. Residue D11 is the Proton donor/acceptor of the active site. Residues R121, R132, R139, S179, and D181 each coordinate alpha-D-mannose 1-phosphate. A Mg(2+)-binding site is contributed by D207.

It belongs to the eukaryotic PMM family. Homodimer.

The protein resides in the cytoplasm. It carries out the reaction alpha-D-mannose 1-phosphate = D-mannose 6-phosphate. It participates in nucleotide-sugar biosynthesis; GDP-alpha-D-mannose biosynthesis; alpha-D-mannose 1-phosphate from D-fructose 6-phosphate: step 2/2. In terms of biological role, involved in the synthesis of the GDP-mannose and dolichol-phosphate-mannose required for a number of critical mannosyl transfer reactions. This Babesia bovis protein is Phosphomannomutase (PMM).